The primary structure comprises 414 residues: uncharacterized protein (414 aa).

Residues 1 to 20 (MKKLLAIGILCIMVTAVMSG) form the signal peptide. Cys-21 is lipidated: S-archaeol cysteine. Positions 119–389 (RVIVMSSTEI…DLATILHPEA (271 aa)) constitute a Fe/B12 periplasmic-binding domain.

The protein localises to the cell membrane. This is an uncharacterized protein from Methanocaldococcus jannaschii (strain ATCC 43067 / DSM 2661 / JAL-1 / JCM 10045 / NBRC 100440) (Methanococcus jannaschii).